Reading from the N-terminus, the 394-residue chain is Queuine tRNA-ribosyltransferase (394 aa).

Residue aspartate 99 is the Proton acceptor of the active site. Substrate contacts are provided by residues 99–103 (DSGGF), aspartate 153, glutamine 195, and glycine 222. Positions 253–259 (GVGHPED) are RNA binding. Aspartate 272 acts as the Nucleophile in catalysis. The tract at residues 277–281 (TRTGR) is RNA binding; important for wobble base 34 recognition. Positions 310, 312, 315, and 341 each coordinate Zn(2+).

Belongs to the queuine tRNA-ribosyltransferase family. As to quaternary structure, homodimer. Within each dimer, one monomer is responsible for RNA recognition and catalysis, while the other monomer binds to the replacement base PreQ1. The cofactor is Zn(2+).

It carries out the reaction 7-aminomethyl-7-carbaguanine + guanosine(34) in tRNA = 7-aminomethyl-7-carbaguanosine(34) in tRNA + guanine. It functions in the pathway tRNA modification; tRNA-queuosine biosynthesis. Catalyzes the base-exchange of a guanine (G) residue with the queuine precursor 7-aminomethyl-7-deazaguanine (PreQ1) at position 34 (anticodon wobble position) in tRNAs with GU(N) anticodons (tRNA-Asp, -Asn, -His and -Tyr). Catalysis occurs through a double-displacement mechanism. The nucleophile active site attacks the C1' of nucleotide 34 to detach the guanine base from the RNA, forming a covalent enzyme-RNA intermediate. The proton acceptor active site deprotonates the incoming PreQ1, allowing a nucleophilic attack on the C1' of the ribose to form the product. After dissociation, two additional enzymatic reactions on the tRNA convert PreQ1 to queuine (Q), resulting in the hypermodified nucleoside queuosine (7-(((4,5-cis-dihydroxy-2-cyclopenten-1-yl)amino)methyl)-7-deazaguanosine). The sequence is that of Queuine tRNA-ribosyltransferase from Deinococcus radiodurans (strain ATCC 13939 / DSM 20539 / JCM 16871 / CCUG 27074 / LMG 4051 / NBRC 15346 / NCIMB 9279 / VKM B-1422 / R1).